A 309-amino-acid polypeptide reads, in one-letter code: tRNA dimethylallyltransferase (309 aa).

11 to 18 (GPTASGKS) is an ATP binding site. 13 to 18 (TASGKS) serves as a coordination point for substrate. 2 interaction with substrate tRNA regions span residues 36–39 (DSMQ) and 160–164 (QRLLR).

It belongs to the IPP transferase family. Monomer. Mg(2+) is required as a cofactor.

The catalysed reaction is adenosine(37) in tRNA + dimethylallyl diphosphate = N(6)-dimethylallyladenosine(37) in tRNA + diphosphate. In terms of biological role, catalyzes the transfer of a dimethylallyl group onto the adenine at position 37 in tRNAs that read codons beginning with uridine, leading to the formation of N6-(dimethylallyl)adenosine (i(6)A). The polypeptide is tRNA dimethylallyltransferase (Caulobacter sp. (strain K31)).